The following is a 728-amino-acid chain: Glycine--tRNA ligase (728 aa).

Residues 1 to 32 (MPCLLPTLLRATRAALLLQSPRVVAAPASQRL) constitute a mitochondrion transit peptide. The 57-residue stretch at 52–108 (LLAPLRLAVRQQGDFVRKLKEDKAPQVDVDRAVAELKARKRVLEAKELALQPKDDIV) folds into the WHEP-TRS domain. An N6-acetyllysine modification is found at lysine 193. Residue glutamate 288 coordinates glycine. ATP contacts are provided by residues 320 to 322 (RNE) and 331 to 332 (RV). Glutamate 339 contacts glycine. Tyrosine 442 bears the Phosphotyrosine mark. An ATP-binding site is contributed by 446-447 (EI). Residue lysine 490 is modified to N6-acetyllysine. 565-567 (EPS) provides a ligand contact to glycine. Arginine 572 contributes to the ATP binding site. Serine 689 bears the Phosphoserine mark. Residue threonine 725 is modified to Phosphothreonine.

This sequence belongs to the class-II aminoacyl-tRNA synthetase family. As to quaternary structure, homodimer.

Its subcellular location is the cytoplasm. The protein localises to the mitochondrion. It is found in the cell projection. The protein resides in the axon. It localises to the secreted. Its subcellular location is the extracellular exosome. The catalysed reaction is tRNA(Gly) + glycine + ATP = glycyl-tRNA(Gly) + AMP + diphosphate. It carries out the reaction 2 ATP + H(+) = P(1),P(4)-bis(5'-adenosyl) tetraphosphate + diphosphate. Its function is as follows. Catalyzes the ATP-dependent ligation of glycine to the 3'-end of its cognate tRNA, via the formation of an aminoacyl-adenylate intermediate (Gly-AMP). Also produces diadenosine tetraphosphate (Ap4A), a universal pleiotropic signaling molecule needed for cell regulation pathways, by direct condensation of 2 ATPs. Thereby, may play a special role in Ap4A homeostasis. The chain is Glycine--tRNA ligase (Gars1) from Rattus norvegicus (Rat).